Here is a 166-residue protein sequence, read N- to C-terminus: Transcription antitermination protein NusB (166 aa).

Positions 1 to 15 (MISDDSDRFNPRDPK) are enriched in basic and acidic residues. The interval 1 to 30 (MISDDSDRFNPRDPKPANAGKPSKSAKRRE) is disordered.

It belongs to the NusB family.

In terms of biological role, involved in transcription antitermination. Required for transcription of ribosomal RNA (rRNA) genes. Binds specifically to the boxA antiterminator sequence of the ribosomal RNA (rrn) operons. The protein is Transcription antitermination protein NusB of Pseudomonas fluorescens (strain ATCC BAA-477 / NRRL B-23932 / Pf-5).